The following is a 218-amino-acid chain: Ras-related protein RABA5e (218 aa).

Residue 19-26 (GDSAVGKS) coordinates GTP. The Effector region signature appears at 41–49 (SKATIGVEF). Residues 67-71 (DTAGQ), 125-128 (NKCD), and 155-156 (SA) contribute to the GTP site. 2 S-geranylgeranyl cysteine lipidation sites follow: C214 and C215. Cysteine methyl ester is present on C215. Residues 216 to 218 (SST) constitute a propeptide, removed in mature form.

The protein belongs to the small GTPase superfamily. Rab family.

It is found in the cell membrane. Its function is as follows. Intracellular vesicle trafficking and protein transport. This is Ras-related protein RABA5e (RABA5E) from Arabidopsis thaliana (Mouse-ear cress).